We begin with the raw amino-acid sequence, 209 residues long: Ribosomal RNA small subunit methyltransferase G (209 aa).

Residues G75, L80, 126-127, and R141 each bind S-adenosyl-L-methionine; that span reads VE.

Belongs to the methyltransferase superfamily. RNA methyltransferase RsmG family.

The protein localises to the cytoplasm. It carries out the reaction guanosine(527) in 16S rRNA + S-adenosyl-L-methionine = N(7)-methylguanosine(527) in 16S rRNA + S-adenosyl-L-homocysteine. Its function is as follows. Specifically methylates the N7 position of guanine in position 527 of 16S rRNA. This is Ribosomal RNA small subunit methyltransferase G from Colwellia psychrerythraea (strain 34H / ATCC BAA-681) (Vibrio psychroerythus).